Here is a 573-residue protein sequence, read N- to C-terminus: FAD-dependent monooxygenase resA (573 aa).

The first 17 residues, 1–17, serve as a signal peptide directing secretion; sequence MYDVIVIGAGWCGLVAA. I106 provides a ligand contact to FAD. A glycan (N-linked (GlcNAc...) asparagine) is linked at N235.

This sequence belongs to the FAD-binding monooxygenase family. FAD is required as a cofactor.

Its pathway is antifungal biosynthesis. FAD-dependent monooxygenase; part of the gene cluster that mediates the biosynthesis of the tetrahydropyranyl antifungal agent restricticin that acts as an inhibitor of CYP51 and blocks the ergosterol biosynthesis. The highly reducing polyketide synthase resH, the short chain dehydrogenase resG, the cyclase resF, the FAD-dependent monooxygenase resA and the enoylreductase resD are required to generate the first stable intermediate desmethylrestrictinol. ResH with resD biosynthesize the first polyketide chain intermediate that is reduced by resG, followed by epoxidation by resA before 6-endo cyclization via epoxide opening by resF leads to desmethylrestrictinol. The methyltransferase resE then catalyzes the C4 O-methylation of desmethylrestrictinol to produce restrictinol, and the nonribosomal peptide synthetase resC catalyzes the C3 esterification of restrictinol with glycine that leads to restricticin. The sequence is that of FAD-dependent monooxygenase resA from Aspergillus sclerotiorum.